A 363-amino-acid polypeptide reads, in one-letter code: UDP-3-O-acylglucosamine N-acyltransferase (363 aa).

Residue histidine 266 is the Proton acceptor of the active site.

Belongs to the transferase hexapeptide repeat family. LpxD subfamily. Homotrimer.

It catalyses the reaction a UDP-3-O-[(3R)-3-hydroxyacyl]-alpha-D-glucosamine + a (3R)-hydroxyacyl-[ACP] = a UDP-2-N,3-O-bis[(3R)-3-hydroxyacyl]-alpha-D-glucosamine + holo-[ACP] + H(+). It participates in bacterial outer membrane biogenesis; LPS lipid A biosynthesis. In terms of biological role, catalyzes the N-acylation of UDP-3-O-acylglucosamine using 3-hydroxyacyl-ACP as the acyl donor. Is involved in the biosynthesis of lipid A, a phosphorylated glycolipid that anchors the lipopolysaccharide to the outer membrane of the cell. The sequence is that of UDP-3-O-acylglucosamine N-acyltransferase from Bordetella pertussis (strain Tohama I / ATCC BAA-589 / NCTC 13251).